A 243-amino-acid polypeptide reads, in one-letter code: Carboxy-S-adenosyl-L-methionine synthase (243 aa).

S-adenosyl-L-methionine is bound by residues Tyr-39, 64-66 (GCS), 89-90 (DN), 117-118 (DL), Asn-132, and Arg-199.

It belongs to the class I-like SAM-binding methyltransferase superfamily. Cx-SAM synthase family. In terms of assembly, homodimer.

The catalysed reaction is prephenate + S-adenosyl-L-methionine = carboxy-S-adenosyl-L-methionine + 3-phenylpyruvate + H2O. Functionally, catalyzes the conversion of S-adenosyl-L-methionine (SAM) to carboxy-S-adenosyl-L-methionine (Cx-SAM). In Pseudoalteromonas atlantica (strain T6c / ATCC BAA-1087), this protein is Carboxy-S-adenosyl-L-methionine synthase.